Reading from the N-terminus, the 315-residue chain is Phosphate transport system permease protein PstC (315 aa).

Over 1–22 (MLTKSRKYFNQTWIESLFKQTT) the chain is Cytoplasmic. A helical membrane pass occupies residues 23 to 43 (ALFALLVFILLAAILISLVIG). The Periplasmic portion of the chain corresponds to 44–77 (SWESIKRFGGSFLLETYWDPVQEQYGAIIPILGT). In terms of domain architecture, ABC transmembrane type-1 spans 74 to 302 (ILGTLITAGI…VITTMVLILS (229 aa)). Residues 78–98 (LITAGIALFIAVPISFGIAIF) form a helical membrane-spanning segment. At 99–117 (LTELAPNWLKRPISIAIEM) the chain is on the cytoplasmic side. A helical membrane pass occupies residues 118-138 (LAAIPSIIYGMWGLFVFVPLF). Residues 139–164 (QEHIQPVLIDNLGNLPGLELFFSGVP) lie on the Periplasmic side of the membrane. The chain crosses the membrane as a helical span at residues 165–185 (FGVGLFTAGLVLAIMIIPFIA). Residues 186–223 (SVMRDVFSIVPPMLKEGAYGLGATTWEVVRQVIVPHTR) lie on the Cytoplasmic side of the membrane. A helical membrane pass occupies residues 224 to 244 (IGLVGSVMLGLGRALGETMAI). Residues 245–281 (TFIIGNSFQLPNSLFSPSTSIASAIANEFNEAGGLQK) lie on the Periplasmic side of the membrane. The helical transmembrane segment at 282–302 (SALMELGLLLFVITTMVLILS) threads the bilayer. Over 303-315 (RLMITKMQQTKGK) the chain is Cytoplasmic.

The protein belongs to the binding-protein-dependent transport system permease family. CysTW subfamily.

It localises to the cell inner membrane. Functionally, part of the binding-protein-dependent transport system for phosphate; probably responsible for the translocation of the substrate across the membrane. In Haemophilus influenzae (strain ATCC 51907 / DSM 11121 / KW20 / Rd), this protein is Phosphate transport system permease protein PstC (pstC).